The sequence spans 435 residues: Astacin-like metalloendopeptidase (435 aa).

The signal sequence occupies residues 1 to 23; that stretch reads MGIMGSLWPWILTMLSLLGLSMG. Positions 85-282 constitute a Peptidase M12A domain; sequence RLLSVTNNKW…TRVCRLYNCS (198 aa). Disulfide bonds link C132-C281 and C153-C172. H182 contacts Zn(2+). Residue E183 is part of the active site. Residues H186 and H192 each coordinate Zn(2+). Positions 318 to 329 are enriched in low complexity; it reads SEESGSSAPSGS. Residues 318-356 are disordered; the sequence is SEESGSSAPSGSRTGGQSIAGLGNSQQGWEHPPQSTFSV. Over residues 340–355 the composition is skewed to polar residues; the sequence is GNSQQGWEHPPQSTFS.

Interacts (via N-terminal domain) with SPACA3; the interaction occurs during fertilization. Zn(2+) is required as a cofactor. As to expression, ovary-specific. Expressed in secondary, antral and Graafian follicle oocytes. Expressed in the egg cells. Not detected in two-cell embryos. Not detected in naked oocytes, oocytes in primordial or unilaminar primary follicles, or in any other ovarian cells at pre-pubertal, pubertal or adult stages (at protein level). Ovary-specific.

Its subcellular location is the cytoplasm. It localises to the cell membrane. It is found in the cytoplasmic vesicle. The protein resides in the secretory vesicle. The protein localises to the cortical granule. With respect to regulation, inhibited by wide spectrum metalloproteinase inhibitor batimastat (BB-94). Also inhibited by EDTA. Its function is as follows. Oocyte-specific oolemmal receptor involved in sperm and egg adhesion and fertilization. Plays a role in the polyspermy inhibition. Probably acts as a protease for the post-fertilization cleavage of ZP2. Cleaves the sperm-binding ZP2 at the surface of the zona pellucida after fertilization and cortical granule exocytosis, rendering the zona pellucida unable to support further sperm binding. The protein is Astacin-like metalloendopeptidase of Mus musculus (Mouse).